The primary structure comprises 254 residues: MSADKSQLSSPPQLWQLTSPASRRRWRCASSLRPVSLCGRGWCESTRWVALVSGDHRGRGVIYYSYYCNFVSLNLFRAARLTTPCICLIYPDDFFLRTRNGRHLSRHSFIDHDSLMIRLPLTRQRENRKVKDDRALGVLFSFSIMKARGSRENASKRRPSQTQYDTHLRTNQRITITRTAESHEPVNQRHKIFTQSFLRTFRNQQVNKDQQRKTILELKKVASLPYEPAAFSIYTRYNIFINVSSLSPDVILFL.

In Human cytomegalovirus (strain Eisenhardt) (HHV-5), this protein is 30 kDa major early protein.